We begin with the raw amino-acid sequence, 492 residues long: Solute carrier family 2, facilitated glucose transporter member 1 (492 aa).

Met-1 bears the N-acetylmethionine mark. Over Met-1 to Arg-11 the chain is Cytoplasmic. The helical transmembrane segment at Leu-12 to Ile-33 threads the bilayer. At Asn-34 to Ser-66 the chain is on the extracellular side. Residue Asn-45 is glycosylated (N-linked (GlcNAc...) asparagine). The chain crosses the membrane as a helical span at residues Leu-67 to Val-87. Residues Asn-88 to Phe-90 are Cytoplasmic-facing. A helical transmembrane segment spans residues Gly-91–Phe-112. Residues Ser-113 to Glu-120 lie on the Extracellular side of the membrane. Residues Met-121–Val-144 form a helical membrane-spanning segment. Topologically, residues Gly-145–Ala-155 are cytoplasmic. The chain crosses the membrane as a helical span at residues Leu-156–Leu-176. Gln-161 contacts D-glucose. Topologically, residues Asp-177–Leu-185 are extracellular. Residues Trp-186–Phe-206 traverse the membrane as a helical segment. The Cytoplasmic segment spans residues Cys-207–Pro-271. Ser-226 carries the phosphoserine modification. Residues Ile-272–Tyr-293 traverse the membrane as a helical segment. D-glucose is bound by residues Gln-282–Gln-283 and Asn-288. Residues Ser-294 to Pro-306 are Extracellular-facing. The chain crosses the membrane as a helical span at residues Val-307–Val-328. Asn-317 contacts D-glucose. The Cytoplasmic segment spans residues Glu-329–Arg-334. The helical transmembrane segment at Thr-335–Leu-355 threads the bilayer. At Ala-356–Ser-365 the chain is on the extracellular side. Residues Tyr-366–Trp-388 traverse the membrane as a helical segment. Glu-380 and Trp-388 together coordinate D-glucose. At Phe-389–Pro-401 the chain is on the cytoplasmic side. The chain crosses the membrane as a helical span at residues Ala-402 to Phe-422. Topologically, residues Gln-423–Cys-429 are extracellular. The chain crosses the membrane as a helical span at residues Gly-430 to Phe-450. Topologically, residues Lys-451–Val-492 are cytoplasmic. Ser-465 carries the post-translational modification Phosphoserine. Residues Arg-468–Val-492 are disordered. Residue Thr-478 is modified to Phosphothreonine. Residue Ser-490 is modified to Phosphoserine.

This sequence belongs to the major facilitator superfamily. Sugar transporter (TC 2.A.1.1) family. Glucose transporter subfamily. Found in a complex with ADD2, DMTN and SLC2A1. Interacts (via C-terminus cytoplasmic region) with DMTN. Interacts with SNX27; the interaction is required when endocytosed to prevent degradation in lysosomes and promote recycling to the plasma membrane. Interacts with GIPC (via PDZ domain). Interacts with STOM. Interacts with SGTA (via Gln-rich region). Interacts with BSG. Interacts with SMIM43; the interaction may promote SLC2A1-mediated glucose transport to meet the energy needs of mesendoderm differentiation. Phosphorylation at Ser-226 by PKC promotes glucose uptake by increasing cell membrane localization. Detected in brain capillary (at protein level). Detected in brain capillary.

The protein resides in the cell membrane. It is found in the photoreceptor inner segment. It carries out the reaction D-glucose(out) = D-glucose(in). With respect to regulation, the uptake of glucose is inhibited by cytochalasin B. Glucose uptake is increased in response to phorbol ester 12-O-tetradecanoylphorbol-13-acetate (TPA) treatment: TPA-induced glucose uptake requires phosphorylation at Ser-226. In terms of biological role, facilitative glucose transporter, which is responsible for constitutive or basal glucose uptake. Has a very broad substrate specificity; can transport a wide range of aldoses including both pentoses and hexoses. Most important energy carrier of the brain: present at the blood-brain barrier and assures the energy-independent, facilitative transport of glucose into the brain. In association with BSG and NXNL1, promotes retinal cone survival by increasing glucose uptake into photoreceptors. Required for mesendoderm differentiation. The sequence is that of Solute carrier family 2, facilitated glucose transporter member 1 from Bos taurus (Bovine).